A 107-amino-acid polypeptide reads, in one-letter code: QDVEAGAVSFRKCAPCHAVGEGAANKVGPVLNGLPGRKSGTIAGFNYSDANKNSGITWDKATFKTYITDPRAKIPGTKMVFAGIKNDKEQDDLWAYLSQFGPDGKKK.

Glutamine 1 carries the pyrrolidone carboxylic acid modification. Heme c contacts are provided by cysteine 13, cysteine 16, histidine 17, and methionine 79.

This sequence belongs to the cytochrome c family. In terms of processing, binds 1 heme c group covalently per subunit.

Its subcellular location is the periplasm. Functionally, cytochrome c2 is found mainly in purple, non-sulfur, photosynthetic bacteria where it functions as the electron donor to the oxidized bacteriochlorophyll in the photophosphorylation pathway. However, it may also have a role in the respiratory chain and is found in some non-photosynthetic bacteria. This Rhodoplanes tepidamans (Rhodoplanes cryptolactis) protein is Cytochrome c2.